The primary structure comprises 305 residues: Ornithine carbamoyltransferase (305 aa).

Carbamoyl phosphate is bound by residues 47–50 (STRT), Arg98, and 125–128 (HPCQ). L-ornithine is bound by residues Asn156, Asp221, and 225 to 226 (SM). Carbamoyl phosphate-binding positions include 262 to 263 (CL) and Arg290.

The protein belongs to the aspartate/ornithine carbamoyltransferase superfamily. OTCase family.

It localises to the cytoplasm. The enzyme catalyses carbamoyl phosphate + L-ornithine = L-citrulline + phosphate + H(+). It functions in the pathway amino-acid biosynthesis; L-arginine biosynthesis; L-arginine from L-ornithine and carbamoyl phosphate: step 1/3. Its function is as follows. Reversibly catalyzes the transfer of the carbamoyl group from carbamoyl phosphate (CP) to the N(epsilon) atom of ornithine (ORN) to produce L-citrulline. In Methanococcus vannielii (strain ATCC 35089 / DSM 1224 / JCM 13029 / OCM 148 / SB), this protein is Ornithine carbamoyltransferase.